The following is a 60-amino-acid chain: Large ribosomal subunit protein bL32 (60 aa).

Residues 1 to 16 are compositionally biased toward basic residues; sequence MAVPRRKTSPSRRGMR. Positions 1–60 are disordered; that stretch reads MAVPRRKTSPSRRGMRRSADAIKKPTYAEDKDSGELRRPHHLDLKTGMYKGRQVLIKKES. Over residues 17 to 44 the composition is skewed to basic and acidic residues; it reads RSADAIKKPTYAEDKDSGELRRPHHLDL.

It belongs to the bacterial ribosomal protein bL32 family.

This is Large ribosomal subunit protein bL32 from Rhodopseudomonas palustris (strain BisA53).